A 312-amino-acid chain; its full sequence is Malate dehydrogenase (312 aa).

NAD(+)-binding positions include 7–13 and Asp-34; that span reads GAAGGIG. Substrate-binding residues include Arg-81 and Arg-87. NAD(+) is bound by residues Asn-94 and 117–119; that span reads ITN. The substrate site is built by Asn-119 and Arg-153. His-177 acts as the Proton acceptor in catalysis. Met-227 is an NAD(+) binding site.

This sequence belongs to the LDH/MDH superfamily. MDH type 1 family. As to quaternary structure, homodimer.

It catalyses the reaction (S)-malate + NAD(+) = oxaloacetate + NADH + H(+). Functionally, catalyzes the reversible oxidation of malate to oxaloacetate. This chain is Malate dehydrogenase, found in Moritella marina (Vibrio marinus).